A 199-amino-acid polypeptide reads, in one-letter code: MIASVRGEVLEVALDHAVIEAAGVGYRVNATPSTLSTLRTGTQARLITAMIVREDSMTLYGFTDAETRDLFLTLLSVSGVGPRLAMATLAVHDAGALRQALHDGDVAALTRVPGIGKRGAERMVLELRDKIGAAGAAGAPAGAARNGHAVRGPVVEALVGLGFAAKQAEEATDKVLAAEPEAGTSGALRAALSLLGKSR.

The interval 1 to 63 (MIASVRGEVL…EDSMTLYGFT (63 aa)) is domain I. Residues 64-142 (DAETRDLFLT…AAGAAGAPAG (79 aa)) form a domain II region. The tract at residues 143–153 (AARNGHAVRGP) is flexible linker. The domain III stretch occupies residues 153–199 (PVVEALVGLGFAAKQAEEATDKVLAAEPEAGTSGALRAALSLLGKSR).

The protein belongs to the RuvA family. Homotetramer. Forms an RuvA(8)-RuvB(12)-Holliday junction (HJ) complex. HJ DNA is sandwiched between 2 RuvA tetramers; dsDNA enters through RuvA and exits via RuvB. An RuvB hexamer assembles on each DNA strand where it exits the tetramer. Each RuvB hexamer is contacted by two RuvA subunits (via domain III) on 2 adjacent RuvB subunits; this complex drives branch migration. In the full resolvosome a probable DNA-RuvA(4)-RuvB(12)-RuvC(2) complex forms which resolves the HJ.

The protein resides in the cytoplasm. Functionally, the RuvA-RuvB-RuvC complex processes Holliday junction (HJ) DNA during genetic recombination and DNA repair, while the RuvA-RuvB complex plays an important role in the rescue of blocked DNA replication forks via replication fork reversal (RFR). RuvA specifically binds to HJ cruciform DNA, conferring on it an open structure. The RuvB hexamer acts as an ATP-dependent pump, pulling dsDNA into and through the RuvAB complex. HJ branch migration allows RuvC to scan DNA until it finds its consensus sequence, where it cleaves and resolves the cruciform DNA. The chain is Holliday junction branch migration complex subunit RuvA from Mycobacterium avium (strain 104).